Reading from the N-terminus, the 730-residue chain is Guanylate cyclase soluble subunit alpha-2 (730 aa).

The tract at residues 1–53 is disordered; that stretch reads MSRRKISSESFSSLGSDYLETSPEEEGECPLSKLCWNGSRSPPGPPGSRAAAM. Residues 519-646 enclose the Guanylate cyclase domain; it reads TMLFSDIVGF…NNVTLASKFE (128 aa).

Belongs to the adenylyl cyclase class-4/guanylyl cyclase family. Heterodimer of an alpha and a beta chain.

It localises to the cytoplasm. It catalyses the reaction GTP = 3',5'-cyclic GMP + diphosphate. Activated by nitric oxide in the presence of magnesium or manganese ions. Functionally, has guanylyl cyclase on binding to the beta-1 subunit. The polypeptide is Guanylate cyclase soluble subunit alpha-2 (Gucy1a2) (Rattus norvegicus (Rat)).